Reading from the N-terminus, the 613-residue chain is Dihydroxy-acid dehydratase (613 aa).

Position 81 (D81) interacts with Mg(2+). C122 lines the [2Fe-2S] cluster pocket. D123 and K124 together coordinate Mg(2+). At K124 the chain carries N6-carboxylysine. Residue C195 coordinates [2Fe-2S] cluster. E491 contacts Mg(2+). Catalysis depends on S517, which acts as the Proton acceptor.

Belongs to the IlvD/Edd family. In terms of assembly, homodimer. [2Fe-2S] cluster serves as cofactor. Mg(2+) is required as a cofactor.

It catalyses the reaction (2R)-2,3-dihydroxy-3-methylbutanoate = 3-methyl-2-oxobutanoate + H2O. The catalysed reaction is (2R,3R)-2,3-dihydroxy-3-methylpentanoate = (S)-3-methyl-2-oxopentanoate + H2O. It functions in the pathway amino-acid biosynthesis; L-isoleucine biosynthesis; L-isoleucine from 2-oxobutanoate: step 3/4. Its pathway is amino-acid biosynthesis; L-valine biosynthesis; L-valine from pyruvate: step 3/4. In terms of biological role, functions in the biosynthesis of branched-chain amino acids. Catalyzes the dehydration of (2R,3R)-2,3-dihydroxy-3-methylpentanoate (2,3-dihydroxy-3-methylvalerate) into 2-oxo-3-methylpentanoate (2-oxo-3-methylvalerate) and of (2R)-2,3-dihydroxy-3-methylbutanoate (2,3-dihydroxyisovalerate) into 2-oxo-3-methylbutanoate (2-oxoisovalerate), the penultimate precursor to L-isoleucine and L-valine, respectively. The chain is Dihydroxy-acid dehydratase from Photobacterium profundum (strain SS9).